The chain runs to 634 residues: Factor of DNA methylation 5 (634 aa).

Residues 254-469 are a coiled coil; that stretch reads IVVDDLANKI…EDTNSALMVK (216 aa).

Functionally, acts in association with FDM3 and FDM4 for RNA-directed DNA methylation (RdDM). This Arabidopsis thaliana (Mouse-ear cress) protein is Factor of DNA methylation 5.